Reading from the N-terminus, the 263-residue chain is Oxidoreductase tpcG (263 aa).

This sequence belongs to the avfA family. In terms of tissue distribution, specifically expressed in conidia.

It functions in the pathway secondary metabolite biosynthesis. Functionally, oxidoreductase; part of the gene cluster that mediates the biosynthesis of trypacidin, a mycotoxin with antiprotozoal activity and that plays a role in the infection process. The pathway begins with the synthesis of atrochrysone thioester by the polyketide synthase (PKS) tpcC. The atrochrysone carboxyl ACP thioesterase tpcB then breaks the thioester bond and releases the atrochrysone carboxylic acid from tpcC. The decarboxylase tpcK converts atrochrysone carboxylic acid to atrochrysone which is further reduced into emodin anthrone. The next step is performed by the emodin anthrone oxygenase tpcL that catalyzes the oxidation of emodinanthrone to emodin. Emodin O-methyltransferase encoded by tpcA catalyzes methylation of the 8-hydroxy group of emodin to form questin. Ring cleavage of questin by questin oxidase tpcI leads to desmethylsulochrin via several intermediates including questin epoxide. Another methylation step catalyzed by tpcM leads to the formation of sulochrin which is further converted to monomethylsulfochrin by tpcH. Finally, the tpcJ catalyzes the conversion of monomethylsulfochrin to trypacidin. Trypacidin is toxic for human pulmonary and bronchial epithelial cells by initiating the intracellular formation of nitric oxide (NO) and hydrogen peroxide (H(2)O(2)), thus triggering host necrotic cell death. The trypacidin pathway is also able to produce endocrocin via a distinct route from the endocrocin Enc pathway. This is Oxidoreductase tpcG from Aspergillus fumigatus (strain ATCC MYA-4609 / CBS 101355 / FGSC A1100 / Af293) (Neosartorya fumigata).